We begin with the raw amino-acid sequence, 585 residues long: MGRIIRVTGPLVVADGMKGSKMYEVVRVGEMGLIGEIIRLEGDKAVIQVYEETAGIRPGEPVEGTGSSLSVELGPGLLTSMYDGIQRPLEKLRELSGDFIARGLTAPALPRDKKWHFTPTVKVGDKVTGGDILGVVPETSIIEHKILVPPWVEGEIVEIAEEGDYTVEEVIAKVKKPDGSIEELKMYHKWPVRVKRPYKNKLPPEVPLITGQRTIDTFFSIAKGGTAAIPGPFGSGKTVTQHQLAKWSDAQVVVYIGCGERGNEMTDVLEEFPKLKDPKTGKPLMERTVLIANTSNMPVAAREASIYTGITIAEYFRDQGYDVALMADSTSRWAEALREISGRLEEMPGEEGYPAYLASKIAEFYERAGRVVTLGSEPRVGSVSVIGAVSPPGGDFSEPVVQNTLRVVKVFWALDADLARRRHFPAINWLRSYSLYLDSIQDWWHKNVDPEWRKMRDTAMALLQKEAELQEIVRIVGPDALPDREKAILIVTRMLREDYLQQDAFDEVDTYCPPKKQVTMMRVILNFYERTMEAVDRGVPVDEIAKLPVREKIGRMKFEPDIEKIRALIDETNEQFEELFKKYGA.

231 to 238 is a binding site for ATP; that stretch reads GPFGSGKT.

This sequence belongs to the ATPase alpha/beta chains family. As to quaternary structure, has multiple subunits with at least A(3), B(3), C, D, E, F, H, I and proteolipid K(x).

The protein localises to the cell membrane. It carries out the reaction ATP + H2O + 4 H(+)(in) = ADP + phosphate + 5 H(+)(out). In terms of biological role, component of the A-type ATP synthase that produces ATP from ADP in the presence of a proton gradient across the membrane. The A chain is the catalytic subunit. The chain is A-type ATP synthase subunit A from Desulfurococcus sp. (strain SY).